Here is a 327-residue protein sequence, read N- to C-terminus: Annexin A8 (327 aa).

Annexin repeat units lie at residues 21 to 92 (FNPD…ALMY), 93 to 164 (PPYR…CLLQ), 177 to 249 (GLAL…TVVK), and 253 to 324 (NLHS…SLVG). Residues Met266, Gly268, Gly270, and Asp310 each contribute to the Ca(2+) site.

Belongs to the annexin family.

In terms of biological role, this protein is an anticoagulant protein that acts as an indirect inhibitor of the thromboplastin-specific complex, which is involved in the blood coagulation cascade. The chain is Annexin A8 from Homo sapiens (Human).